The primary structure comprises 1223 residues: Rho family-interacting cell polarization regulator 1 (1223 aa).

S22 carries the post-translational modification Phosphoserine. Residues 83–112 (RGLTAYLEVHQQEQEKLQRQIKESKRNSRL) adopt a coiled-coil conformation. A phosphoserine mark is found at S345 and S347. T351 bears the Phosphothreonine mark. The disordered stretch occupies residues 371 to 411 (NGTAWSLSSESSDDSSSPQLSGTARHSTPKPLVQQPEPLPV). Low complexity-rich tracts occupy residues 376-391 (SLSSESSDDSSSPQLS) and 399-411 (PKPLVQQPEPLPV). 3 positions are modified to phosphoserine: S451, S454, and S468. Low complexity-rich tracts occupy residues 566 to 586 (TTIGSAHTTTPSPLTSTGSVP) and 595 to 655 (TPSP…TSPT). Disordered stretches follow at residues 566–771 (TTIG…QHSE) and 856–887 (FLNDDEDEDNDGPGDRHTSSPEVVAEDRLDSS). Polar residues predominate over residues 656–665 (QEAKMSTHTT). Low complexity predominate over residues 673–688 (TTTSPISTTESPSPST). Composition is skewed to polar residues over residues 693 to 703 (ISSSSAESTGP) and 725 to 741 (ASCTSYQSLASSGSKPL). S748 bears the Phosphoserine mark. Over residues 748 to 767 (SPEQIPKSPSSSPSSSAPEP) the composition is skewed to low complexity. Over residues 858–867 (NDDEDEDNDG) the composition is skewed to acidic residues. The span at 868-885 (PGDRHTSSPEVVAEDRLD) shows a compositional bias: basic and acidic residues. Phosphoserine occurs at positions 874 and 875.

The protein belongs to the RIPOR family. As to quaternary structure, interacts (via N-terminus) with RHOA (GTP-bound form); this interaction links active RHOA to STK24 and STK26 kinases. Interacts with RHOB. Interacts with RHOC. Interacts (via C-terminus) with PDCD10; this interaction occurs in a Rho-independent manner. Interacts (via C-terminus) with STK24; this interaction occurs in a PDCD10-dependent and Rho-independent manner. Interacts (via C-terminus) with STK26; this interaction occurs in a PDCD10-dependent and Rho-independent manner. Interacts (via N-terminus) with 14-3-3 proteins; these interactions occur in a Rho-dependent manner. In terms of tissue distribution, expressed in the kidney exclusively by glomerular podocytes.

The protein localises to the cytoplasm. The protein resides in the golgi apparatus. Its function is as follows. Downstream effector protein for Rho-type small GTPases that plays a role in cell polarity and directional migration. Acts as an adapter protein, linking active Rho proteins to STK24 and STK26 kinases, and hence positively regulates Golgi reorientation in polarized cell migration upon Rho activation. Involved in the subcellular relocation of STK26 from the Golgi to cytoplasm punctae in a Rho- and PDCD10-dependent manner upon serum stimulation. This is Rho family-interacting cell polarization regulator 1 from Mus musculus (Mouse).